Reading from the N-terminus, the 235-residue chain is Small ribosomal subunit protein uS2c (235 aa).

It belongs to the universal ribosomal protein uS2 family.

Its subcellular location is the plastid. The protein resides in the chloroplast. The protein is Small ribosomal subunit protein uS2c (rps2) of Adiantum capillus-veneris (Maidenhair fern).